A 348-amino-acid polypeptide reads, in one-letter code: tRNA N6-adenosine threonylcarbamoyltransferase (348 aa).

Fe cation-binding residues include His116 and His120. Residues 138 to 142 (IISGG), Asp171, Gly184, and Asn282 contribute to the substrate site. Asp310 provides a ligand contact to Fe cation.

The protein belongs to the KAE1 / TsaD family. It depends on Fe(2+) as a cofactor.

It is found in the cytoplasm. The enzyme catalyses L-threonylcarbamoyladenylate + adenosine(37) in tRNA = N(6)-L-threonylcarbamoyladenosine(37) in tRNA + AMP + H(+). In terms of biological role, required for the formation of a threonylcarbamoyl group on adenosine at position 37 (t(6)A37) in tRNAs that read codons beginning with adenine. Is involved in the transfer of the threonylcarbamoyl moiety of threonylcarbamoyl-AMP (TC-AMP) to the N6 group of A37, together with TsaE and TsaB. TsaD likely plays a direct catalytic role in this reaction. This chain is tRNA N6-adenosine threonylcarbamoyltransferase, found in Ehrlichia ruminantium (strain Gardel).